We begin with the raw amino-acid sequence, 402 residues long: 26S proteasome regulatory subunit 8 (402 aa).

186-193 lines the ATP pocket; it reads GPPGTGKT.

It belongs to the AAA ATPase family.

The protein resides in the cytoplasm. It is found in the nucleus. The 26S proteasome is involved in the ATP-dependent degradation of ubiquitinated proteins. The regulatory (or ATPase) complex confers ATP dependency and substrate specificity to the 26S complex. The protein is 26S proteasome regulatory subunit 8 of Manduca sexta (Tobacco hawkmoth).